The sequence spans 289 residues: F-box protein PP2-B15 (289 aa).

Residues 1–43 enclose the F-box domain; that stretch reads MMLPEACVATILSFTTPADTISSAAVSSVFRVAGDSDFVWEKF.

This is F-box protein PP2-B15 (PP2B15) from Arabidopsis thaliana (Mouse-ear cress).